Here is a 426-residue protein sequence, read N- to C-terminus: Histidine--tRNA ligase (426 aa).

This sequence belongs to the class-II aminoacyl-tRNA synthetase family. In terms of assembly, homodimer.

It is found in the cytoplasm. It catalyses the reaction tRNA(His) + L-histidine + ATP = L-histidyl-tRNA(His) + AMP + diphosphate + H(+). The chain is Histidine--tRNA ligase from Hydrogenovibrio crunogenus (strain DSM 25203 / XCL-2) (Thiomicrospira crunogena).